The sequence spans 84 residues: Large ribosomal subunit protein bL27 (84 aa).

Belongs to the bacterial ribosomal protein bL27 family.

In Campylobacter jejuni subsp. jejuni serotype O:6 (strain 81116 / NCTC 11828), this protein is Large ribosomal subunit protein bL27.